The primary structure comprises 373 residues: T-protein (373 aa).

In terms of domain architecture, Chorismate mutase spans 1–90; that stretch reads MVAELTALRD…ESYTSENDKG (90 aa). The 263-residue stretch at 99–361 folds into the Prephenate/arogenate dehydrogenase domain; it reads RPVVIVGGKG…DHAKRFLVES (263 aa).

In the C-terminal section; belongs to the prephenate/arogenate dehydrogenase family.

The protein resides in the cytoplasm. It carries out the reaction chorismate = prephenate. The enzyme catalyses prephenate + NAD(+) = 3-(4-hydroxyphenyl)pyruvate + CO2 + NADH. The protein operates within amino-acid biosynthesis; L-tyrosine biosynthesis; (4-hydroxyphenyl)pyruvate from prephenate (NAD(+) route): step 1/1. It functions in the pathway metabolic intermediate biosynthesis; prephenate biosynthesis; prephenate from chorismate: step 1/1. In Enterobacter agglomerans (Erwinia herbicola), this protein is T-protein (tyrA).